Consider the following 435-residue polypeptide: S-locus-specific glycoprotein BS29-2 (435 aa).

An N-terminal signal peptide occupies residues 1 to 30 (MKGVGKPYENSHTSFLLVFFVLTLFSPAFS). The 123-residue stretch at 33–155 (TLSSIESLKI…NKNDRSGFLW (123 aa)) folds into the Bulb-type lectin domain. Residues asparagine 113, asparagine 120, asparagine 244, asparagine 260, and asparagine 389 are each glycosylated (N-linked (GlcNAc...) asparagine). The PAN domain maps to 350–430 (CSGDGFTRMK…NGQDLYVRLA (81 aa)). 2 disulfides stabilise this stretch: cysteine 380-cysteine 405 and cysteine 388-cysteine 390.

As to expression, stigma.

Its function is as follows. Involved in sporophytic self-incompatibility system (the inability of flowering plants to achieve self-fertilization). The sequence is that of S-locus-specific glycoprotein BS29-2 (SLSG) from Brassica oleracea var. alboglabra (Chinese kale).